The chain runs to 391 residues: 8-amino-7-oxononanoate synthase (391 aa).

108–109 (GF) lines the pyridoxal 5'-phosphate pocket. H133 contributes to the substrate binding site. Residues S180, H208, and T236 each contribute to the pyridoxal 5'-phosphate site. Position 239 is an N6-(pyridoxal phosphate)lysine (K239). T353 provides a ligand contact to substrate.

This sequence belongs to the class-II pyridoxal-phosphate-dependent aminotransferase family. BioF subfamily. As to quaternary structure, homodimer. It depends on pyridoxal 5'-phosphate as a cofactor.

The catalysed reaction is 6-carboxyhexanoyl-[ACP] + L-alanine + H(+) = (8S)-8-amino-7-oxononanoate + holo-[ACP] + CO2. It participates in cofactor biosynthesis; biotin biosynthesis. Its function is as follows. Catalyzes the decarboxylative condensation of pimeloyl-[acyl-carrier protein] and L-alanine to produce 8-amino-7-oxononanoate (AON), [acyl-carrier protein], and carbon dioxide. The protein is 8-amino-7-oxononanoate synthase of Thermosipho melanesiensis (strain DSM 12029 / CIP 104789 / BI429).